We begin with the raw amino-acid sequence, 159 residues long: Small ribosomal subunit protein uS9 (159 aa).

Belongs to the universal ribosomal protein uS9 family.

The protein is Small ribosomal subunit protein uS9 of Beijerinckia indica subsp. indica (strain ATCC 9039 / DSM 1715 / NCIMB 8712).